The sequence spans 440 residues: 23S rRNA (uracil(1939)-C(5))-methyltransferase RlmD (440 aa).

One can recognise a TRAM domain in the interval Ser-11–Lys-69. 4 residues coordinate [4Fe-4S] cluster: Cys-82, Cys-88, Cys-91, and Cys-169. The S-adenosyl-L-methionine site is built by Gln-272, Phe-301, Asn-306, Glu-322, Asn-349, and Asp-370. Catalysis depends on Cys-396, which acts as the Nucleophile.

It belongs to the class I-like SAM-binding methyltransferase superfamily. RNA M5U methyltransferase family. RlmD subfamily.

It carries out the reaction uridine(1939) in 23S rRNA + S-adenosyl-L-methionine = 5-methyluridine(1939) in 23S rRNA + S-adenosyl-L-homocysteine + H(+). Catalyzes the formation of 5-methyl-uridine at position 1939 (m5U1939) in 23S rRNA. The chain is 23S rRNA (uracil(1939)-C(5))-methyltransferase RlmD from Vibrio cholerae serotype O1 (strain M66-2).